A 483-amino-acid chain; its full sequence is GTPase Der (483 aa).

2 EngA-type G domains span residues phenylalanine 3 to arginine 167 and leucine 212 to asparagine 387. Residues glycine 9–serine 16, aspartate 56–leucine 60, asparagine 119–glutamate 122, glycine 218–serine 225, aspartate 265–methionine 269, and asparagine 330–aspartate 333 contribute to the GTP site. Residues arginine 388–aspartate 472 form the KH-like domain.

Belongs to the TRAFAC class TrmE-Era-EngA-EngB-Septin-like GTPase superfamily. EngA (Der) GTPase family. In terms of assembly, associates with the 50S ribosomal subunit.

GTPase that plays an essential role in the late steps of ribosome biogenesis. This chain is GTPase Der, found in Brucella abortus (strain 2308).